We begin with the raw amino-acid sequence, 162 residues long: Caveolin-2 (162 aa).

Over 1–86 (MGLETEKADV…FEISKYVMYK (86 aa)) the chain is Cytoplasmic. Tyr-19 carries the post-translational modification Phosphotyrosine; by SRC. Ser-20 and Ser-23 each carry phosphoserine. Tyr-27 carries the post-translational modification Phosphotyrosine; by SRC. Ser-36 is subject to Phosphoserine. The helical intramembrane region spans 87 to 107 (FLTVFLAIPLAFIAGILFATL). Residues 108-162 (SCLHIWILMPFVKTCLMVLPSVQTIWKSVTDVIIAPLCTSVGRCFSSVSLQLSQD) lie on the Cytoplasmic side of the membrane.

This sequence belongs to the caveolin family. In terms of assembly, monomer or homodimer. Interacts with CAV1; the interaction forms a stable heterooligomeric complex that is required for targeting to lipid rafts and for caveolae formation. Tyrosine phosphorylated forms do not form heterooligomers with the Tyr-19-phosphorylated form existing as a monomer or dimer, and the Tyr-27-form as a monomer only. Interacts (tyrosine phosphorylated form) with the SH2 domain-containing proteins, RASA1, NCK1 and SRC. Interacts (tyrosine phosphorylated form) with INSR, the interaction (Tyr-27-phosphorylated form) is increased on insulin stimulation. Interacts (Tyr-19 phosphorylated form) with MAPK1 (phosphorylated form); the interaction, promoted by insulin, leads to nuclear location and MAPK1 activation. Interacts with STAT3; the interaction is increased on insulin-induced tyrosine phosphorylation leading to STAT activation. In terms of processing, phosphorylated on serine and tyrosine residues. CAV1 promotes phosphorylation on Ser-23 which then targets the complex to the plasma membrane, lipid rafts and caveolae. Phosphorylation on Ser-36 appears to modulate mitosis in endothelial cells. Phosphorylation on both Tyr-19 and Tyr-27 is required for insulin-induced 'Ser-727' phosphorylation of STAT3 and its activation. Phosphorylation on Tyr-19 is required for insulin-induced phosphorylation of MAPK1 and DNA binding of STAT3. Tyrosine phosphorylation is induced by both EGF and insulin (By. similarity).

Its subcellular location is the nucleus. It is found in the cytoplasm. The protein localises to the golgi apparatus membrane. It localises to the cell membrane. The protein resides in the membrane. Its subcellular location is the caveola. Its function is as follows. May act as a scaffolding protein within caveolar membranes. Interacts directly with G-protein alpha subunits and can functionally regulate their activity. Acts as an accessory protein in conjunction with CAV1 in targeting to lipid rafts and driving caveolae formation. The Ser-36 phosphorylated form has a role in modulating mitosis in endothelial cells. Positive regulator of cellular mitogenesis of the MAPK signaling pathway. Required for the insulin-stimulated nuclear translocation and activation of MAPK1 and STAT3, and the subsequent regulation of cell cycle progression. The protein is Caveolin-2 (CAV2) of Pan troglodytes (Chimpanzee).